A 466-amino-acid chain; its full sequence is Alpha-1A adrenergic receptor (466 aa).

The Extracellular segment spans residues 1 to 27; that stretch reads MVFLSGNASDSSNCTHPPPPVNISKAI. Asn-7, Asn-13, and Asn-22 each carry an N-linked (GlcNAc...) asparagine glycan. The helical transmembrane segment at 28 to 51 threads the bilayer; it reads LLGVILGGLILFGVLGNILVILSV. Over 52–64 the chain is Cytoplasmic; it reads ACHRHLHSVTHYY. Residues 65-88 traverse the membrane as a helical segment; it reads IVNLAVADLLLTSTVLPFSAIFEI. Over 89–99 the chain is Extracellular; it reads LGYWAFGRVFC. A disulfide bond links Cys-99 and Cys-176. A helical transmembrane segment spans residues 100–122; it reads NVWAAVDVLCCTASIMGLCIISI. Topologically, residues 123–143 are cytoplasmic; it reads DRYIGVSYPLRYPTIVTQKRG. Residues 144-167 traverse the membrane as a helical segment; the sequence is LMALLCVWALSLVISIGPLFGWRQ. The Extracellular portion of the chain corresponds to 168-181; that stretch reads PAPEDETICQINEE. The helical transmembrane segment at 182-205 threads the bilayer; sequence PGYVLFSALGSFYVPLTIILVMYC. Residues 206-273 are Cytoplasmic-facing; that stretch reads RVYVVAKRES…FSREKKAAKT (68 aa). Ser-215 is modified (phosphoserine; by PKA). The helical transmembrane segment at 274–297 threads the bilayer; the sequence is LGIVVGCFVLCWLPFFLVMPIGSF. Residues 298-305 are Extracellular-facing; that stretch reads FPDFRPSE. Residues 306–329 form a helical membrane-spanning segment; the sequence is TVFKIAFWLGYLNSCINPIIYPCS. The Cytoplasmic portion of the chain corresponds to 330–466; the sequence is SQEFKKAFQN…ISLSENGEEV (137 aa). A Nuclear localization signal motif is present at residues 334 to 349; sequence KKAFQNVLRIQCLRRK. Residue Cys-345 is the site of S-palmitoyl cysteine attachment.

The protein belongs to the G-protein coupled receptor 1 family. Adrenergic receptor subfamily. ADRA1A sub-subfamily. Homo- and heterooligomer. Heterooligomerizes with ADRA1B homooligomers in cardiac myocytes. Interacts with CAVIN4.

The protein localises to the nucleus membrane. It is found in the cell membrane. The protein resides in the cytoplasm. Its subcellular location is the membrane. It localises to the caveola. In terms of biological role, this alpha-adrenergic receptor mediates its action by association with G proteins that activate a phosphatidylinositol-calcium second messenger system. Its effect is mediated by G(q) and G(11) proteins. Nuclear ADRA1A-ADRA1B heterooligomers regulate phenylephrine (PE)-stimulated ERK signaling in cardiac myocytes. The polypeptide is Alpha-1A adrenergic receptor (ADRA1A) (Bos taurus (Bovine)).